A 142-amino-acid chain; its full sequence is Large ribosomal subunit protein uL11 (142 aa).

Belongs to the universal ribosomal protein uL11 family. In terms of assembly, part of the ribosomal stalk of the 50S ribosomal subunit. Interacts with L10 and the large rRNA to form the base of the stalk. L10 forms an elongated spine to which L12 dimers bind in a sequential fashion forming a multimeric L10(L12)X complex. One or more lysine residues are methylated.

In terms of biological role, forms part of the ribosomal stalk which helps the ribosome interact with GTP-bound translation factors. The polypeptide is Large ribosomal subunit protein uL11 (Hydrogenovibrio crunogenus (strain DSM 25203 / XCL-2) (Thiomicrospira crunogena)).